Here is a 424-residue protein sequence, read N- to C-terminus: Phosphoprotein associated with glycosphingolipid-enriched microdomains 1 (424 aa).

Topologically, residues 1–17 (MGPAGSALSSGQMQMQM) are extracellular. The chain crosses the membrane as a helical; Signal-anchor for type III membrane protein span at residues 18–38 (VLWGSLAAVAMFFLITFLILL). Residues Cys39 and Cys42 are each lipidated (S-palmitoyl cysteine). Residues 39 to 424 (CSSCDRDKKP…LQQGRDVTRL (386 aa)) lie on the Cytoplasmic side of the membrane. A phosphoserine mark is found at Ser52 and Ser63. A Phosphotyrosine; by LYN modification is found at Tyr107. A Phosphoserine modification is found at Ser157. 3 positions are modified to phosphotyrosine: Tyr165, Tyr183, and Tyr224. The segment at 194 to 347 (DKSQGGKSKS…GPPQRSSSSC (154 aa)) is disordered. A compositionally biased stretch (basic and acidic residues) spans 215-230 (AEGKADFAEYASVDRN). A Phosphoserine modification is found at Ser226. Positions 236–247 (STNAESILGTSS) are enriched in polar residues. Tyr314 carries the post-translational modification Phosphotyrosine; by FYN and LYN. Residues 314-317 (YSSV) are interaction with CSK. Positions 331–347 (STCQCPQGPPQRSSSSC) are enriched in polar residues. Ser346 is subject to Phosphoserine. 3 positions are modified to phosphotyrosine: Tyr351, Tyr381, and Tyr409. The interval 361–424 (PNSISMLPPA…LQQGRDVTRL (64 aa)) is disordered. The interaction with NHERF1 stretch occupies residues 422–424 (TRL).

Interacts with NHERF1/EBP50. In resting T-cells, part of a PAG1-NHERF1-MSN complex which is disrupted upon TCR activation. When phosphorylated, interacts with CSK. Identified in a complex with LYN and STAT3. Interacts with LYN. In terms of processing, palmitoylated. Post-translationally, phosphorylated by FYN on Tyr-314 in resting T-cells; which promotes interaction with CSK. Dephosphorylated by PTPRC/CD45 upon TCR activation; which leads to CSK dissociation. May also be dephosphorylated by PTPN11. Hyperphosphorylated in mast cells upon FCER1 activation. Phosphorylated by LYN in response to EPO. Ubiquitously expressed, with highest levels in developing brain, lung, thymus, spleen and testis. Present in mast cells.

The protein localises to the cell membrane. In terms of biological role, negatively regulates TCR (T-cell antigen receptor)-mediated signaling in T-cells and FCER1 (high affinity immunoglobulin epsilon receptor)-mediated signaling in mast cells. Promotes CSK activation and recruitment to lipid rafts, which results in LCK inhibition. Inhibits immunological synapse formation by preventing dynamic arrangement of lipid raft proteins. May be involved in cell adhesion signaling. In Rattus norvegicus (Rat), this protein is Phosphoprotein associated with glycosphingolipid-enriched microdomains 1 (Pag1).